A 233-amino-acid polypeptide reads, in one-letter code: Octanoyltransferase (233 aa).

The region spanning 36–211 (DTTPDEIWLV…EFTRQLGYPT (176 aa)) is the BPL/LPL catalytic domain. Substrate contacts are provided by residues 75–82 (RGGQVTYH), 142–144 (SLG), and 155–157 (GLA). The active-site Acyl-thioester intermediate is the Cys173.

It belongs to the LipB family.

It localises to the cytoplasm. The enzyme catalyses octanoyl-[ACP] + L-lysyl-[protein] = N(6)-octanoyl-L-lysyl-[protein] + holo-[ACP] + H(+). Its pathway is protein modification; protein lipoylation via endogenous pathway; protein N(6)-(lipoyl)lysine from octanoyl-[acyl-carrier-protein]: step 1/2. Catalyzes the transfer of endogenously produced octanoic acid from octanoyl-acyl-carrier-protein onto the lipoyl domains of lipoate-dependent enzymes. Lipoyl-ACP can also act as a substrate although octanoyl-ACP is likely to be the physiological substrate. The polypeptide is Octanoyltransferase (Yersinia pseudotuberculosis serotype O:3 (strain YPIII)).